The primary structure comprises 216 residues: Somatotropin (216 aa).

The first 25 residues, 1–25 (MAPGSWFSPLFITVITLGLQWPQEA), serve as a signal peptide directing secretion. A Zn(2+)-binding site is contributed by histidine 46. An intrachain disulfide couples cysteine 78 to cysteine 189. Glutamate 198 contacts Zn(2+). Cysteine 206 and cysteine 214 are joined by a disulfide.

It belongs to the somatotropin/prolactin family.

The protein resides in the secreted. Its function is as follows. Growth hormone plays an important role in growth control. The sequence is that of Somatotropin (GH) from Anas platyrhynchos (Mallard).